Reading from the N-terminus, the 524-residue chain is Cytochrome P450 monooxygenase ankB (524 aa).

Residues 22 to 42 (FHALSIQAPGLLLGTLLFYLF) form a helical membrane-spanning segment. Cys-466 is a heme binding site.

The protein belongs to the cytochrome P450 family. It depends on heme as a cofactor.

Its subcellular location is the membrane. It carries out the reaction cyclo(L-arginyl-tyrosyl) + reduced [NADPH--hemoprotein reductase] + O2 = cyclo(L-arginyl-L-dehydrotyrosyl) + oxidized [NADPH--hemoprotein reductase] + 2 H2O + H(+). Its pathway is alkaloid biosynthesis. Its function is as follows. Cytochrome P450 monooxygenase; part of the ank cluster that mediates the biosynthesis of NK13650 C, a highly modified cyclo-arginine-tyrosine dipeptide. AnkB is responsible for desaturation of the ankA product cyclo-Arg-Tyr diketopiperazine, likely through hydroxylation of the benzylic position followed by dehydration to yield a dehydro-cyclodipeptide. Within the pathway, the cyclodipeptide synthase ankA acts as the scaffold-generating enzyme and is responsible for formation of the cyclo-Arg-Tyr diketopiperazine (cRY) from L-Arg and L-Tyr. The ankA product cRY is desaturated by the cytochrome P450 monooxygenase ankB to yield a dehydro-cyclodipeptide intermediate. The FAD-dependent monooxygenase ankC then installs the m-OH, ankD catalyzes the attachment of L-homoserine, and ankE ligates citrate to the ankD product to yield NK13650 B. The O-methyltransferase ankF is responsible for methylation of the C-17 phenol group of NK13650 B to produce NK13650 D. Amidation of NK13650 D with L-Asp by ankG then leads to the production of NK13650 C, whereas amidation of NK13650 B produces NK13650 A. In Aspergillus thermomutatus (Neosartorya pseudofischeri), this protein is Cytochrome P450 monooxygenase ankB.